An 843-amino-acid polypeptide reads, in one-letter code: Alpha-L-fucosidase 2 (843 aa).

A signal peptide spans 1–27; sequence MAEKSSFFVHFSCLLLLLTIIITCGEG. N62, N253, N365, and N605 each carry an N-linked (GlcNAc...) asparagine glycan.

This sequence belongs to the glycosyl hydrolase 95 family. In terms of tissue distribution, ubiquitous. Highest expression in vascular tissues, leaf trichomes, root elongation zone and emerging lateral roots.

The protein localises to the secreted. It is found in the extracellular space. The protein resides in the apoplast. The enzyme catalyses an alpha-L-fucoside + H2O = L-fucose + an alcohol. Its function is as follows. Hydrolyzes alpha-1,2-linked fucose. Also active on fucosylated xyloglucan oligosaccharides. No activity with 3-fucosyllactose, p-nitrophenyl-alpha-I-fucopyranoside, lacto-N-fucopentaose II, lacto-N-fucopentaose III or alpha 1,6-fucosylated chitopentaose. Involved in apoplastic xyloglucan metabolism. The protein is Alpha-L-fucosidase 2 (FUC95A) of Arabidopsis thaliana (Mouse-ear cress).